A 196-amino-acid chain; its full sequence is Molybdenum cofactor guanylyltransferase (196 aa).

GTP-binding positions include 14 to 16 (LAG), K27, D73, and D106. Residue D106 coordinates Mg(2+).

It belongs to the MobA family. In terms of assembly, monomer. Mg(2+) is required as a cofactor.

It localises to the cytoplasm. The enzyme catalyses Mo-molybdopterin + GTP + H(+) = Mo-molybdopterin guanine dinucleotide + diphosphate. Its function is as follows. Transfers a GMP moiety from GTP to Mo-molybdopterin (Mo-MPT) cofactor (Moco or molybdenum cofactor) to form Mo-molybdopterin guanine dinucleotide (Mo-MGD) cofactor. The chain is Molybdenum cofactor guanylyltransferase from Acidiphilium cryptum (strain JF-5).